Consider the following 115-residue polypeptide: Probable non-functional T cell receptor beta variable 23-1 (115 aa).

The signal sequence occupies residues 1 to 21 (MGTRLLGCAALCLLAADSFHA). The 94-residue stretch at 22–115 (KVTQTPGHLV…TALYLCASSQ (94 aa)) folds into the Ig-like domain. Cys-42 and Cys-111 are disulfide-bonded.

Alpha-beta TR is a heterodimer composed of an alpha and beta chain; disulfide-linked. The alpha-beta TR is associated with the transmembrane signaling CD3 coreceptor proteins to form the TR-CD3 (TcR or TCR). The assembly of alpha-beta TR heterodimers with CD3 occurs in the endoplasmic reticulum where a single alpha-beta TR heterodimer associates with one CD3D-CD3E heterodimer, one CD3G-CD3E heterodimer and one CD247 homodimer forming a stable octameric structure. CD3D-CD3E and CD3G-CD3E heterodimers preferentially associate with TR alpha and TR beta chains, respectively. The association of the CD247 homodimer is the last step of TcR assembly in the endoplasmic reticulum and is required for transport to the cell surface.

The protein resides in the cell membrane. Probable non-functional open reading frame (ORF) of V region of the variable domain of T cell receptor (TR) beta chain. Non-functional ORF generally cannot participate in the synthesis of a productive T cell receptor (TR) chain due to altered V-(D)-J or switch recombination and/or splicing site (at mRNA level) and/or conserved amino acid change (protein level). Alpha-beta T cell receptors are antigen specific receptors which are essential to the immune response and are present on the cell surface of T lymphocytes. Recognize peptide-major histocompatibility (MH) (pMH) complexes that are displayed by antigen presenting cells (APC), a prerequisite for efficient T cell adaptive immunity against pathogens. Binding of alpha-beta TR to pMH complex initiates TR-CD3 clustering on the cell surface and intracellular activation of LCK that phosphorylates the ITAM motifs of CD3G, CD3D, CD3E and CD247 enabling the recruitment of ZAP70. In turn ZAP70 phosphorylates LAT, which recruits numerous signaling molecules to form the LAT signalosome. The LAT signalosome propagates signal branching to three major signaling pathways, the calcium, the mitogen-activated protein kinase (MAPK) kinase and the nuclear factor NF-kappa-B (NF-kB) pathways, leading to the mobilization of transcription factors that are critical for gene expression and essential for T cell growth and differentiation. The T cell repertoire is generated in the thymus, by V-(D)-J rearrangement. This repertoire is then shaped by intrathymic selection events to generate a peripheral T cell pool of self-MH restricted, non-autoaggressive T cells. Post-thymic interaction of alpha-beta TR with the pMH complexes shapes TR structural and functional avidity. This Homo sapiens (Human) protein is Probable non-functional T cell receptor beta variable 23-1.